Reading from the N-terminus, the 301-residue chain is Probable 5-dehydro-4-deoxyglucarate dehydratase (301 aa).

This sequence belongs to the DapA family.

The catalysed reaction is 5-dehydro-4-deoxy-D-glucarate + H(+) = 2,5-dioxopentanoate + CO2 + H2O. It participates in carbohydrate acid metabolism; D-glucarate degradation; 2,5-dioxopentanoate from D-glucarate: step 2/2. The protein is Probable 5-dehydro-4-deoxyglucarate dehydratase of Xanthobacter autotrophicus (strain ATCC BAA-1158 / Py2).